Reading from the N-terminus, the 307-residue chain is Replication termination factor 2 (307 aa).

Residues 193–296 (AKLEKKTKKP…SSAKRSKEES (104 aa)) form a disordered region. A compositionally biased stretch (basic and acidic residues) spans 227–241 (GKPEEADPDPREKKS). The residue at position 288 (Ser288) is a Phosphoserine.

It belongs to the rtf2 family. As to quaternary structure, interacts with DDI2; probably also interacts with DDI1. Post-translationally, undergoes proteasomal degradation, via DDI1 and DDI2. Removal from stalled replisomes and degradation are required for genome stability.

The protein resides in the chromosome. Functionally, replication termination factor which is a component of the elongating replisome. Required for ATR pathway signaling upon DNA damage and has a positive activity during DNA replication. Might function to facilitate fork pausing at replication fork barriers like the rDNA. May be globally required to stimulate ATR signaling after the fork stalls or encounters a lesion. Interacts with nascent DNA. In Mus musculus (Mouse), this protein is Replication termination factor 2.